Reading from the N-terminus, the 359-residue chain is N-acetylhexosamine 1-kinase (359 aa).

Residues 21–359 enclose the Protein kinase domain; that stretch reads VTGIEPYGDG…IVADIMEAAR (339 aa).

Belongs to the protein kinase superfamily. Mg(2+) serves as cofactor.

The enzyme catalyses N-acetyl-D-hexosamine + ATP = N-acetyl-alpha-D-hexosamine 1-phosphate + ADP + H(+). Functionally, phosphorylates both N-acetylglucosamine (GlcNAc) and N-acetylgalactosamine (GalNAc) at similar rates. Involved in the lacto-N-biose I/galacto-N-biose (LNB/GNB) degradation pathway, which is important for host intestinal colonization by bifidobacteria. Also accepts GTP and ITP as phosphate donors. In vitro, can phosphorylate several GlcNAc and GalNAc derivatives. The polypeptide is N-acetylhexosamine 1-kinase (nahK) (Bifidobacterium longum subsp. longum (strain ATCC 15707 / DSM 20219 / JCM 1217 / NCTC 11818 / E194b)).